We begin with the raw amino-acid sequence, 409 residues long: Alpha-1-antitrypsin (409 aa).

The first 15 residues, Leu-1–Ala-15, serve as a signal peptide directing secretion. Residues Pro-18 to Asn-39 are disordered. Residues Asn-61, Asn-98, Asn-136, and Asn-262 are each glycosylated (N-linked (GlcNAc...) asparagine). The interval Gly-364 to Lys-383 is RCL. Phosphoserine is present on Ser-374.

Belongs to the serpin family. As to quaternary structure, interacts with CELA2A. Interacts with ERGIC3 and LMAN1/ERGIC53. Interacts with PRSS1/Trypsin. In terms of tissue distribution, plasma.

The protein localises to the secreted. Inhibitor of serine proteases. Its primary target is elastase, but it also has a moderate affinity for plasmin and thrombin. Inhibits trypsin, chymotrypsin and plasminogen activator. The chain is Alpha-1-antitrypsin (SERPINA1) from Papio anubis (Olive baboon).